A 344-amino-acid polypeptide reads, in one-letter code: Aspartate-semialdehyde dehydrogenase (344 aa).

NADP(+)-binding positions include 10 to 13 (TGQV) and 38 to 39 (RS). Arg-101 is a phosphate binding site. Catalysis depends on Cys-131, which acts as the Acyl-thioester intermediate. Substrate is bound at residue Gln-158. 161 to 162 (SG) is an NADP(+) binding site. Phosphate is bound at residue Lys-228. Arg-250 serves as a coordination point for substrate. The Proton acceptor role is filled by His-257. Asn-326 contributes to the NADP(+) binding site.

It belongs to the aspartate-semialdehyde dehydrogenase family. In terms of assembly, homodimer.

The enzyme catalyses L-aspartate 4-semialdehyde + phosphate + NADP(+) = 4-phospho-L-aspartate + NADPH + H(+). Its pathway is amino-acid biosynthesis; L-lysine biosynthesis via DAP pathway; (S)-tetrahydrodipicolinate from L-aspartate: step 2/4. It participates in amino-acid biosynthesis; L-methionine biosynthesis via de novo pathway; L-homoserine from L-aspartate: step 2/3. It functions in the pathway amino-acid biosynthesis; L-threonine biosynthesis; L-threonine from L-aspartate: step 2/5. Functionally, catalyzes the NADPH-dependent formation of L-aspartate-semialdehyde (L-ASA) by the reductive dephosphorylation of L-aspartyl-4-phosphate. The chain is Aspartate-semialdehyde dehydrogenase from Corynebacterium melassecola.